Here is a 469-residue protein sequence, read N- to C-terminus: GTPase Der (469 aa).

EngA-type G domains lie at 3–167 (PTLV…PEEE) and 176–349 (PKIA…AAAF). GTP-binding positions include 9–16 (GRPNVGKS), 56–60 (DTGGL), 119–122 (NKAE), 182–189 (GRPNVGKS), 229–233 (DTAGV), and 294–297 (NKWD). One can recognise a KH-like domain in the interval 350–436 (IKLSTPKLTR…RIQIKEDEGK (87 aa)). Basic and acidic residues predominate over residues 432-443 (EDEGKNPFEGKK). The interval 432 to 469 (EDEGKNPFEGKKRAPLSESEATRMRRKKRVRRKVYGAD) is disordered. The span at 455-469 (MRRKKRVRRKVYGAD) shows a compositional bias: basic residues.

Belongs to the TRAFAC class TrmE-Era-EngA-EngB-Septin-like GTPase superfamily. EngA (Der) GTPase family. In terms of assembly, associates with the 50S ribosomal subunit.

GTPase that plays an essential role in the late steps of ribosome biogenesis. The chain is GTPase Der from Thiobacillus denitrificans (strain ATCC 25259 / T1).